We begin with the raw amino-acid sequence, 367 residues long: tRNA-specific 2-thiouridylase MnmA (367 aa).

Residues 12-19 (GMSGGVDS) and Met38 each bind ATP. The interaction with target base in tRNA stretch occupies residues 98 to 100 (NPD). Cys103 functions as the Nucleophile in the catalytic mechanism. Residues Cys103 and Cys200 are joined by a disulfide bond. Gly128 lines the ATP pocket. The tract at residues 150–152 (KDQ) is interaction with tRNA. Cys200 functions as the Cysteine persulfide intermediate in the catalytic mechanism. The segment at 312–313 (RY) is interaction with tRNA.

This sequence belongs to the MnmA/TRMU family. As to quaternary structure, interacts with TusE.

The protein resides in the cytoplasm. The catalysed reaction is S-sulfanyl-L-cysteinyl-[protein] + uridine(34) in tRNA + AH2 + ATP = 2-thiouridine(34) in tRNA + L-cysteinyl-[protein] + A + AMP + diphosphate + H(+). Its function is as follows. Catalyzes the 2-thiolation of uridine at the wobble position (U34) of tRNA(Lys), tRNA(Glu) and tRNA(Gln), leading to the formation of s(2)U34, the first step of tRNA-mnm(5)s(2)U34 synthesis. Sulfur is provided by IscS, via a sulfur-relay system. Binds ATP and its substrate tRNAs. The chain is tRNA-specific 2-thiouridylase MnmA from Blochmanniella pennsylvanica (strain BPEN).